An 88-amino-acid chain; its full sequence is Small ribosomal subunit protein uS15 (88 aa).

Belongs to the universal ribosomal protein uS15 family. In terms of assembly, part of the 30S ribosomal subunit. Forms a bridge to the 50S subunit in the 70S ribosome, contacting the 23S rRNA.

Functionally, one of the primary rRNA binding proteins, it binds directly to 16S rRNA where it helps nucleate assembly of the platform of the 30S subunit by binding and bridging several RNA helices of the 16S rRNA. Forms an intersubunit bridge (bridge B4) with the 23S rRNA of the 50S subunit in the ribosome. The chain is Small ribosomal subunit protein uS15 from Verminephrobacter eiseniae (strain EF01-2).